The primary structure comprises 120 residues: Spermidine export protein MdtJ (120 aa).

Helical transmembrane passes span 1–21 (MFYWILLALAIAAEITGTLSM), 31–51 (TGFILMLVMITLSYIFLSFAV), 54–74 (IALGVAYALWEGIGILFITLF), and 81–101 (EALSAMKIAGLVTLVFGIALI).

Belongs to the drug/metabolite transporter (DMT) superfamily. Small multidrug resistance (SMR) (TC 2.A.7.1) family. MdtJ subfamily. As to quaternary structure, forms a complex with MdtI.

Its subcellular location is the cell inner membrane. In terms of biological role, catalyzes the excretion of spermidine. This is Spermidine export protein MdtJ from Citrobacter koseri (strain ATCC BAA-895 / CDC 4225-83 / SGSC4696).